A 3750-amino-acid polypeptide reads, in one-letter code: Cubilin homolog (3750 aa).

The first 28 residues, 1-28 (MEGAARSRLLLCWTLLAIITDTWPIAEG), serve as a signal peptide directing secretion. N-linked (GlcNAc...) asparagine glycosylation is found at asparagine 51 and asparagine 123. The EGF-like 1 domain occupies 154-190 (EANSCASGPCENGGTCYNTYTGFRCQCRSAFEGTKCE). 6 disulfide bridges follow: cysteine 158–cysteine 169, cysteine 163–cysteine 178, cysteine 180–cysteine 189, cysteine 196–cysteine 212, cysteine 206–cysteine 221, and cysteine 223–cysteine 232. The EGF-like 2; calcium-binding domain maps to 192-233 (DVNECALYEGTDLGCQNGGQCQNHFGTYSCLCQPGWHGMHCT). In terms of domain architecture, EGF-like 3; calcium-binding spans 282 to 308 (DVDECSDSAAHKPCSTSCINLPGSFTC). The 29-residue stretch at 324 to 352 (DLDECQTNNGGCSLSPKVDCINTYGSYHC) folds into the EGF-like 4; calcium-binding domain. Asparagine 424 is a glycosylation site (N-linked (GlcNAc...) asparagine). 2 EGF-like domains span residues 426–463 (TTTNCKENPCLNGGICLFAGPSNYTCLCPIGFRPPICE) and 465–503 (QPSPCDQHPCKNGGRCRPTTSGDLFVCQCLPGYRGRLCE). 7 cysteine pairs are disulfide-bonded: cysteine 430–cysteine 441, cysteine 435–cysteine 451, cysteine 453–cysteine 462, cysteine 469–cysteine 480, cysteine 474–cysteine 491, cysteine 493–cysteine 502, and cysteine 509–cysteine 535. Asparagine 448 carries N-linked (GlcNAc...) asparagine glycosylation. CUB domains follow at residues 509 to 623 (CNGM…WNSM), 627 to 738 (CGGR…YSVE), 744 to 852 (CGGV…YRMA), 853 to 971 (CDYK…YRAL), 978 to 1095 (CGGV…YTFE), 1100 to 1212 (CGGH…WRIF), 1216 to 1331 (CGGS…YKAN), 1332 to 1434 (CIRN…QLDY), 1439 to 1550 (CMEE…YRTV), 1554 to 1670 (CGGK…FHES), 1671 to 1788 (CGQT…YMTM), 1792 to 1902 (CGSI…YNYE), and 1903 to 2001 (HHNE…WNRL). N-linked (GlcNAc...) asparagine glycans are attached at residues asparagine 542 and asparagine 548. Cysteine 562 and cysteine 584 are disulfide-bonded. An N-linked (GlcNAc...) asparagine glycan is attached at asparagine 609. 6 disulfide bridges follow: cysteine 627/cysteine 654, cysteine 681/cysteine 701, cysteine 744/cysteine 770, cysteine 853/cysteine 879, cysteine 913/cysteine 933, and cysteine 978/cysteine 1004. A glycan (N-linked (GlcNAc...) asparagine) is linked at asparagine 871. Positions 1026, 1034, and 1080 each coordinate Ca(2+). An intrachain disulfide couples cysteine 1031 to cysteine 1058. The cysteines at positions 1100 and 1126 are disulfide-linked. Residue asparagine 1119 is glycosylated (N-linked (GlcNAc...) asparagine). Glutamate 1148 is a binding site for Ca(2+). N-linked (GlcNAc...) asparagine glycosylation occurs at asparagine 1152. The cysteines at positions 1153 and 1175 are disulfide-linked. Ca(2+)-binding residues include aspartate 1156 and aspartate 1197. An intrachain disulfide couples cysteine 1216 to cysteine 1242. Ca(2+)-binding residues include glutamate 1264, aspartate 1272, and aspartate 1316. Residues cysteine 1269 and cysteine 1292 are joined by a disulfide bond. A disulfide bridge links cysteine 1332 with cysteine 1360. Asparagine 1335, asparagine 1359, asparagine 1413, and asparagine 1424 each carry an N-linked (GlcNAc...) asparagine glycan. Cysteine 1439 and cysteine 1465 are oxidised to a cystine. The N-linked (GlcNAc...) asparagine glycan is linked to asparagine 1491. Intrachain disulfides connect cysteine 1492–cysteine 1513, cysteine 1554–cysteine 1580, cysteine 1607–cysteine 1631, cysteine 1671–cysteine 1697, cysteine 1733–cysteine 1755, cysteine 1792–cysteine 1818, and cysteine 1845–cysteine 1866. N-linked (GlcNAc...) asparagine glycosylation is present at asparagine 1694. N-linked (GlcNAc...) asparagine glycans are attached at residues asparagine 1908 and asparagine 2009. 2 disulfide bridges follow: cysteine 2019–cysteine 2048 and cysteine 2077–cysteine 2100. CUB domains follow at residues 2019-2139 (CGNQ…VRTA), 2140-2256 (CGSE…FRFE), 2262-2383 (DSGR…LSVA), 2385-2512 (CGGS…YTSL), and 2516-2646 (CGET…MNEV). Residues asparagine 2092, asparagine 2128, asparagine 2152, and asparagine 2231 are each glycosylated (N-linked (GlcNAc...) asparagine). Cysteines 2140 and 2167 form a disulfide. An intrachain disulfide couples cysteine 2324 to cysteine 2346. N-linked (GlcNAc...) asparagine glycosylation occurs at asparagine 2377. Cysteine 2385 and cysteine 2416 are disulfide-bonded. Asparagine 2442 carries an N-linked (GlcNAc...) asparagine glycan. Cystine bridges form between cysteine 2445–cysteine 2474 and cysteine 2516–cysteine 2542. N-linked (GlcNAc...) asparagine glycosylation is found at asparagine 2655, asparagine 2671, asparagine 2682, and asparagine 2772. 2 disulfide bridges follow: cysteine 2761-cysteine 2790 and cysteine 2837-cysteine 2859. CUB domains are found at residues 2761-2895 (CGGV…IKYG), 2898-3010 (CGGK…FERN), 3011-3128 (CGGL…YTSR), 3130-3246 (CGGI…VRVM), 3249-3364 (CDEK…INAI), 3368-3512 (CGSS…VALN), 3522-3615 (LQGR…YLAS), and 3623-3736 (CGGQ…FAGV). N-linked (GlcNAc...) asparagine glycans are attached at residues asparagine 2885 and asparagine 2889. Intrachain disulfides connect cysteine 2898/cysteine 2921 and cysteine 2949/cysteine 2973. 3 N-linked (GlcNAc...) asparagine glycosylation sites follow: asparagine 2960, asparagine 2965, and asparagine 2982. Cysteines 3011 and 3039 form a disulfide. 2 N-linked (GlcNAc...) asparagine glycosylation sites follow: asparagine 3040 and asparagine 3074. 2 disulfide bridges follow: cysteine 3070-cysteine 3092 and cysteine 3130-cysteine 3157. Asparagine 3160 is a glycosylation site (N-linked (GlcNAc...) asparagine). 4 disulfides stabilise this stretch: cysteine 3184-cysteine 3207, cysteine 3249-cysteine 3278, cysteine 3305-cysteine 3327, and cysteine 3368-cysteine 3402. The N-linked (GlcNAc...) asparagine glycan is linked to asparagine 3256. Asparagine 3427 carries an N-linked (GlcNAc...) asparagine glycan. Cysteine 3430 and cysteine 3475 are oxidised to a cystine. 3 N-linked (GlcNAc...) asparagine glycosylation sites follow: asparagine 3543, asparagine 3572, and asparagine 3645. 3 disulfide bridges follow: cysteine 3560-cysteine 3579, cysteine 3623-cysteine 3649, and cysteine 3676-cysteine 3699.

In terms of tissue distribution, specifically expressed in nephrocytes.

The protein resides in the cell membrane. Required in the nephrocyte for normal uptake of proteins and elimination of toxins, and for maintenance of endocytic trafficking structures. May function together with Amnionless. The polypeptide is Cubilin homolog (Drosophila melanogaster (Fruit fly)).